Consider the following 204-residue polypeptide: Large ribosomal subunit protein bL25 (204 aa).

This sequence belongs to the bacterial ribosomal protein bL25 family. CTC subfamily. As to quaternary structure, part of the 50S ribosomal subunit; part of the 5S rRNA/L5/L18/L25 subcomplex. Contacts the 5S rRNA. Binds to the 5S rRNA independently of L5 and L18.

This is one of the proteins that binds to the 5S RNA in the ribosome where it forms part of the central protuberance. The protein is Large ribosomal subunit protein bL25 of Burkholderia pseudomallei (strain 668).